We begin with the raw amino-acid sequence, 138 residues long: Basic phospholipase A2 myotoxin I (138 aa).

The first 16 residues, methionine 1 to glycine 16, serve as a signal peptide directing secretion. Disulfide bonds link cysteine 42–cysteine 131, cysteine 44–cysteine 60, cysteine 59–cysteine 111, cysteine 65–cysteine 138, cysteine 66–cysteine 104, cysteine 73–cysteine 97, and cysteine 91–cysteine 102. Ca(2+) is bound by residues tyrosine 43, glycine 45, and glycine 47. Residue histidine 63 is part of the active site. Aspartate 64 is a Ca(2+) binding site. The active site involves aspartate 105.

Belongs to the phospholipase A2 family. Group II subfamily. D49 sub-subfamily. In terms of assembly, monomer. Homodimer; non-covalently linked (alternative/compact dimer conformation). Ca(2+) is required as a cofactor. In terms of tissue distribution, expressed by the venom gland.

The protein resides in the secreted. It carries out the reaction a 1,2-diacyl-sn-glycero-3-phosphocholine + H2O = a 1-acyl-sn-glycero-3-phosphocholine + a fatty acid + H(+). High level of membrane cholesterol content reduces cytolytic activity, whereas low level of membrane cholesterol content increases cytolytic activity. Snake venom phospholipase A2 (PLA2) that displays local myotoxic activity. It also displays anticoagulant action in plasma and edema-inducing activities. In addition, it shows cytotoxic activity to a variety of cell types and bactericidal activity to a variety of Gram-negative and Gram-positive bacteria. PLA2 catalyzes the calcium-dependent hydrolysis of the 2-acyl groups in 3-sn-phosphoglycerides. In Bothrops asper (Terciopelo), this protein is Basic phospholipase A2 myotoxin I.